A 201-amino-acid chain; its full sequence is Large ribosomal subunit protein bL12m (201 aa).

The N-terminal 38 residues, 1-38, are a transit peptide targeting the mitochondrion; it reads MLPVAASRCLWGPRLGLRGAALRLARQQMPSVCAARQL. Disordered stretches follow at residues 37 to 60 and 109 to 130; these read QLRS…APKE and VSAA…QKER. Residues lysine 128, lysine 141, lysine 145, and lysine 147 each carry the N6-acetyllysine modification. Lysine 153 carries the post-translational modification N6-acetyllysine; alternate. Lysine 153 bears the N6-succinyllysine; alternate mark. Lysine 153 participates in a covalent cross-link: Glycyl lysine isopeptide (Lys-Gly) (interchain with G-Cter in ubiquitin). Lysine 165 carries the post-translational modification N6-succinyllysine. An N6-acetyllysine mark is found at lysine 166 and lysine 176. Lysine 181 is modified (N6-acetyllysine; alternate). N6-succinyllysine; alternate is present on lysine 181. Lysine 188 carries the N6-acetyllysine modification.

This sequence belongs to the bacterial ribosomal protein bL12 family. As to quaternary structure, component of the mitochondrial ribosome large subunit (39S) which comprises a 16S rRNA and about 50 distinct proteins. Interacts with NOA1. In terms of processing, two mature forms are produced by differential two-step proteolytic cleavage. Cleaved by the mitochondrial processing protease to produce the long mature form and subsequently by the mitochondrial intermediate protease to produce the short mature form. Post-translationally, in the presence of CUL3, undergoes 'Lys-63'-linked ubiquitination at Lys-153 which results in proteasomal degradation.

The protein resides in the mitochondrion matrix. In terms of biological role, as a component of the mitochondrial large ribosomal subunit, plays a role in mitochondrial translation. When present in mitochondria as a free protein not associated with the ribosome, associates with mitochondrial RNA polymerase POLRMT to activate transcription. Required for POLRMT stability. This chain is Large ribosomal subunit protein bL12m (Mrpl12), found in Mus musculus (Mouse).